The primary structure comprises 281 residues: Nucleotide-binding protein MADE_1004170 (281 aa).

8–15 (GRSGSGKS) is a binding site for ATP. 56–59 (DVRN) contributes to the GTP binding site.

The protein belongs to the RapZ-like family.

Its function is as follows. Displays ATPase and GTPase activities. The sequence is that of Nucleotide-binding protein MADE_1004170 from Alteromonas mediterranea (strain DSM 17117 / CIP 110805 / LMG 28347 / Deep ecotype).